Consider the following 183-residue polypeptide: MDIDPYKEFGASVELLSFLPSDFFPSVRDLLDTATALYRDALESPEHCTPHHTALRHVCLCWGDLMNLATWVGTNLEDQASRDLVVSYVNTNMGLKFRQLLWFHISCLTFGRDLVLEYLVSFGVWIRTPPAYRPSNAPILSTLPETTVVRQRGRTIRRRTPSPRRRRSQSPRRRRSQSRESQC.

The interval 150–183 (RQRGRTIRRRTPSPRRRRSQSPRRRRSQSRESQC) is disordered. The span at 151–176 (QRGRTIRRRTPSPRRRRSQSPRRRRS) shows a compositional bias: basic residues. Residues 158–175 (RRTPSPRRRRSQSPRRRR) carry the Bipartite nuclear localization signal motif. S162 and S170 each carry phosphoserine; by host. Repeat copies occupy residues 162–169 (SPRRRRSQ) and 170–177 (SPRRRRSQ). The interval 162-177 (SPRRRRSQSPRRRRSQ) is 2 X 8 AA repeats of S-P-R-R-R-[PR]-S-Q. The interval 177 to 183 (QSRESQC) is RNA binding.

Belongs to the orthohepadnavirus core antigen family. In terms of assembly, homodimerizes, then multimerizes. Interacts with cytosol exposed regions of viral L glycoprotein present in the reticulum-to-Golgi compartment. Interacts with human FLNB. Phosphorylated form interacts with host importin alpha; this interaction depends on the exposure of the NLS, which itself depends upon genome maturation and/or phosphorylation of the capsid protein. Interacts with host NUP153. In terms of processing, phosphorylated by host SRPK1, SRPK2, and maybe protein kinase C or GAPDH. Phosphorylation is critical for pregenomic RNA packaging. Protein kinase C phosphorylation is stimulated by HBx protein and may play a role in transport of the viral genome to the nucleus at the late step during the viral replication cycle.

It localises to the virion. It is found in the host cytoplasm. Its function is as follows. Self assembles to form an icosahedral capsid. Most capsids appear to be large particles with an icosahedral symmetry of T=4 and consist of 240 copies of capsid protein, though a fraction forms smaller T=3 particles consisting of 180 capsid proteins. Entering capsids are transported along microtubules to the nucleus. Phosphorylation of the capsid is thought to induce exposure of nuclear localization signal in the C-terminal portion of the capsid protein that allows binding to the nuclear pore complex via the importin (karyopherin-) alpha and beta. Capsids are imported in intact form through the nuclear pore into the nuclear basket, where it probably binds NUP153. Only capsids that contain the mature viral genome can release the viral DNA and capsid protein into the nucleoplasm. Immature capsids get stuck in the basket. Capsids encapsulate the pre-genomic RNA and the P protein. Pre-genomic RNA is reverse-transcribed into DNA while the capsid is still in the cytoplasm. The capsid can then either be directed to the nucleus, providing more genomes for transcription, or bud through the endoplasmic reticulum to provide new virions. The sequence is that of Capsid protein from Homo sapiens (Human).